A 176-amino-acid polypeptide reads, in one-letter code: I-Kappa-B like protein G1 (176 aa).

ANK repeat units follow at residues Glu-56–Ser-88, Phe-93–Ala-123, and Leu-127–Asp-156.

It belongs to the polydnaviridae I-Kappa-B-like protein family.

Suppresses the host immune response through NF-kappa-B inactivation. Possesses ankyrin repeat domains required for NF-kappa-B binding but lacks the regulatory regions required for dissociation from NF-kappa-B and degradation. Therefore, prevents host NF-kappa-B release and subsequent activation. This Microplitis demolitor (Parasitoid wasp) protein is I-Kappa-B like protein G1 (G3).